A 226-amino-acid chain; its full sequence is Probable transcriptional regulator RABBIT EARS (226 aa).

A C2H2-type zinc finger spans residues tyrosine 55–histidine 77. A disordered region spans residues aspartate 80–cysteine 102. Residues lysine 85–alanine 97 show a composition bias toward polar residues. The short motif at leucine 212–leucine 216 is the EAR-like (transcriptional repression) element.

Strongly expressed in inflorescences and flowers, and weakly in siliques, seedlings and roots. In flowers, it is expressed in petal primordia and their precursor cells. Also expressed in the lateral root caps and the basal cells of lateral roots.

The protein resides in the nucleus. In terms of biological role, probable transcriptional regulator essential for petal development. Required for the early development of the organ primordia of the second whorl. Acts downstream of AP1 and PTL. The sequence is that of Probable transcriptional regulator RABBIT EARS (RBE) from Arabidopsis thaliana (Mouse-ear cress).